The primary structure comprises 295 residues: Tyrosine transport system permease protein (295 aa).

The next 8 helical transmembrane spans lie at 3 to 23, 57 to 77, 81 to 101, 122 to 142, 173 to 193, 200 to 220, 232 to 252, and 256 to 276; these read GIISVMTQSLILSIMALGVYI, VVATLMAILCGCTAGLVTGIL, FKISNLLSGILVMGMLYSINL, ISPIVLALAFVFICKILLDLF, ILGLMISNGLIALSGSLMAQF, NMGIGTLVLGIASIIIGITLF, IIVGSFIYQFTIYFAMSLGML, and LKLITAIVIIAFLATGNLNIS.

It belongs to the binding-protein-dependent transport system permease family. The complex is probably composed of two ATP-binding proteins (CDR20291_0806), two transmembrane proteins (CDR20291_0807) and a solute-binding protein (CDR20291_0805).

The protein localises to the cell membrane. Probably part of an ABC transporter complex involved in tyrosine uptake. May also import phenylalanine. Probably responsible for the translocation of the substrate across the membrane. This chain is Tyrosine transport system permease protein, found in Clostridioides difficile (strain R20291) (Peptoclostridium difficile).